Here is a 262-residue protein sequence, read N- to C-terminus: GTP cyclohydrolase 1 type 2 homolog (262 aa).

The a divalent metal cation site is built by His-68, His-69, Asp-108, His-226, and Glu-229.

Belongs to the GTP cyclohydrolase I type 2/NIF3 family. As to quaternary structure, homohexamer.

The sequence is that of GTP cyclohydrolase 1 type 2 homolog from Ureaplasma parvum serovar 3 (strain ATCC 700970).